Reading from the N-terminus, the 427-residue chain is Adenylosuccinate synthetase (427 aa).

GTP is bound by residues G12–K18 and G40–T42. The active-site Proton acceptor is D13. Mg(2+)-binding residues include D13 and G40. Residues D13–K16, N38–H41, T128, R142, Q223, T238, and R302 contribute to the IMP site. H41 serves as the catalytic Proton donor. Residue T298 to R304 coordinates substrate. Residues R304, K330–D332, and G412–G414 contribute to the GTP site.

The protein belongs to the adenylosuccinate synthetase family. As to quaternary structure, homodimer. The cofactor is Mg(2+).

It is found in the cytoplasm. The catalysed reaction is IMP + L-aspartate + GTP = N(6)-(1,2-dicarboxyethyl)-AMP + GDP + phosphate + 2 H(+). Its pathway is purine metabolism; AMP biosynthesis via de novo pathway; AMP from IMP: step 1/2. In terms of biological role, plays an important role in the de novo pathway of purine nucleotide biosynthesis. Catalyzes the first committed step in the biosynthesis of AMP from IMP. In Pelotomaculum thermopropionicum (strain DSM 13744 / JCM 10971 / SI), this protein is Adenylosuccinate synthetase.